The chain runs to 314 residues: Carbamate kinase (314 aa).

Belongs to the carbamate kinase family. In terms of assembly, homodimer.

It localises to the cytoplasm. It carries out the reaction hydrogencarbonate + NH4(+) + ATP = carbamoyl phosphate + ADP + H2O + H(+). In Pyrococcus horikoshii (strain ATCC 700860 / DSM 12428 / JCM 9974 / NBRC 100139 / OT-3), this protein is Carbamate kinase (cpkA).